A 65-amino-acid polypeptide reads, in one-letter code: Small ribosomal subunit protein bS21 (65 aa).

Residues 45–65 (GRLKRSRSRRRAQRANEERNS) are disordered. A compositionally biased stretch (basic residues) spans 48-57 (KRSRSRRRAQ).

The protein belongs to the bacterial ribosomal protein bS21 family.

The sequence is that of Small ribosomal subunit protein bS21 from Pelodictyon phaeoclathratiforme (strain DSM 5477 / BU-1).